The following is a 154-amino-acid chain: Transcriptional repressor NrdR (154 aa).

Residues 3–34 (CPFCGANDTKVIDSRLVAEGEQVRRRRECLAC) fold into a zinc finger. Positions 49–139 (PRLIKQDGSR…VYRRFQDLNE (91 aa)) constitute an ATP-cone domain.

This sequence belongs to the NrdR family. It depends on Zn(2+) as a cofactor.

Its function is as follows. Negatively regulates transcription of bacterial ribonucleotide reductase nrd genes and operons by binding to NrdR-boxes. In Pseudomonas syringae pv. tomato (strain ATCC BAA-871 / DC3000), this protein is Transcriptional repressor NrdR.